The sequence spans 141 residues: MPKYYCEYCDKYLTHDSPSVRKSHTIGKVHQQAVTLYYKQFEAEWFKSQMQQKGGQVPMMPPFGMQPGLLPPNMVPGQFNIPMMPPGQFPFPPPPGQPMGGMPPHQQQPMSFNPHHPYPPPHLQQSAQQFNSNSPPSNNDQ.

Residues 4–36 (YYCEYCDKYLTHDSPSVRKSHTIGKVHQQAVTL) form a Matrin-type zinc finger. The tract at residues 69 to 141 (LLPPNMVPGQ…SNSPPSNNDQ (73 aa)) is disordered. The span at 83-97 (MMPPGQFPFPPPPGQ) shows a compositional bias: pro residues. Low complexity-rich tracts occupy residues 100–110 (GGMPPHQQQPM) and 124–141 (QQSA…NNDQ).

Belongs to the U1 small nuclear ribonucleoprotein C family. Component of the U1 snRNP. The U1 snRNP is composed of the U1 snRNA and the 7 core Sm proteins SNRPB, SNRPD1, SNRPD2, SNRPD3, SNRPE, SNRPF and SNRPG that assemble in a heptameric protein ring on the Sm site of the small nuclear RNA to form the core snRNP, and at least 3 U1 snRNP-specific proteins SNRNP70/U1-70K, SNRPA/U1-A and SNRPC/U1-C. SNRPC/U1-C interacts with U1 snRNA and the 5' splice-site region of the pre-mRNA.

It is found in the nucleus. Its function is as follows. Component of the spliceosomal U1 snRNP, which is essential for recognition of the pre-mRNA 5' splice-site and the subsequent assembly of the spliceosome. SNRPC/U1-C is directly involved in initial 5' splice-site recognition for both constitutive and regulated alternative splicing. The interaction with the 5' splice-site seems to precede base-pairing between the pre-mRNA and the U1 snRNA. Stimulates commitment or early (E) complex formation by stabilizing the base pairing of the 5' end of the U1 snRNA and the 5' splice-site region. The chain is U1 small nuclear ribonucleoprotein C from Heterostelium pallidum (strain ATCC 26659 / Pp 5 / PN500) (Cellular slime mold).